Reading from the N-terminus, the 851-residue chain is Phosphatidylinositol 4-kinase pik1 (851 aa).

In terms of domain architecture, PIK helical spans 1 to 123 (MPSSNSGNEL…KICKRLYNRI (123 aa)). 4 positions are modified to phosphoserine: S202, S219, S222, and S235. Y236 is subject to Phosphotyrosine. The tract at residues 384–404 (LQDSTDNDISESESEGGDLSM) is disordered. A compositionally biased stretch (acidic residues) spans 388–399 (TDNDISESESEG). Residues 558–836 (YAKKERIRKS…LIQKANCSVW (279 aa)) form the PI3K/PI4K catalytic domain. Residues 564-570 (IRKSSPY) are G-loop. The catalytic loop stretch occupies residues 706 to 714 (QLKDRHNGN). The segment at 725–749 (HIDFGFLLTNTPGNVGFESAPFKLT) is activation loop.

The protein belongs to the PI3/PI4-kinase family. Interacts with cdc4 and cam2.

It localises to the golgi apparatus. The protein resides in the nucleus. It catalyses the reaction a 1,2-diacyl-sn-glycero-3-phospho-(1D-myo-inositol) + ATP = a 1,2-diacyl-sn-glycero-3-phospho-(1D-myo-inositol 4-phosphate) + ADP + H(+). In terms of biological role, acts on phosphatidylinositol (PI) in the first committed step in the production of the second messenger inositol 1,4,5,-trisphosphate. PIK1 is part of a nuclear phosphoinositide cycle and could control cytokinesis through the actin cytoskeleton. This chain is Phosphatidylinositol 4-kinase pik1 (pik1), found in Schizosaccharomyces pombe (strain 972 / ATCC 24843) (Fission yeast).